The following is a 488-amino-acid chain: MTSNSCLISLGLLLVLIQILAPAKAAEHSVFTHKNASSVLGQLVTSSTLVWESYDPKDATQLQFAVEGGKYVTEDEHYPMYVCRVPIDGIQVSGHTEKILQRHVCLAAHYKHGKYDNFDVLMNKGHLGKVGWRHWRKFDAGVPVGAIRIGDDSYIGRHRAPSQPNKDGVVTHWGADFNLGHLEPVGLGKIRVIEAEREKYYDDGEVLVETEPFRYELRDIKLDRLRTDIQENMTELVTRKLENLEDKYSTVETILSYTFNYNQYWGSHEGVARGLPTKIFEKDEAVPAEINWALKHTEKRSENKAVHTKLWPGTAINVTLRGNYVTLEAPYSGKLFAFYYGSDESVSRKISAEVRKSYLKEVKLEFSPVYWIENGTLVPTTTTTTTTSTSTTTHATTTSTNEPTPINEPPLVHMKDNGVQHSGPDTLEKTLHDSPSSNELNSHEAPENMSSDPGKDVALAGFGVNAAGSTFIAGSALLTLLLTIFLSL.

The first 21 residues, methionine 1–alanine 21, serve as a signal peptide directing secretion. Topologically, residues proline 22–asparagine 465 are extracellular. N-linked (GlcNAc...) asparagine glycosylation is found at asparagine 35, asparagine 232, asparagine 317, and asparagine 374. Residues threonine 380–threonine 400 show a composition bias toward low complexity. The segment at threonine 380 to proline 453 is disordered. Asparagine 448 carries N-linked (GlcNAc...) asparagine glycosylation. Residues alanine 466–leucine 486 form a helical membrane-spanning segment. Residues serine 487 to leucine 488 are Cytoplasmic-facing.

It is found in the membrane. Its function is as follows. Required for normal axon patterning during neurogenesis. This chain is Protein unzipped (uzip), found in Drosophila melanogaster (Fruit fly).